The sequence spans 939 residues: Translation initiation factor IF-2 (939 aa).

A disordered region spans residues lysine 48–glutamate 355. Residues glutamine 79–asparagine 93 are compositionally biased toward low complexity. Residues serine 114 to arginine 130 are compositionally biased toward basic and acidic residues. The span at aspartate 131–phenylalanine 257 shows a compositional bias: low complexity. Residues arginine 287 to glutamate 355 show a composition bias toward basic and acidic residues. The region spanning proline 440 to lysine 609 is the tr-type G domain. The G1 stretch occupies residues glycine 449–threonine 456. Glycine 449–threonine 456 contacts GTP. The segment at glycine 474 to lysine 478 is G2. The G3 stretch occupies residues aspartate 495 to glycine 498. GTP contacts are provided by residues aspartate 495–histidine 499 and asparagine 549–aspartate 552. Residues asparagine 549–aspartate 552 are G4. Residues serine 585–histidine 587 are G5.

It belongs to the TRAFAC class translation factor GTPase superfamily. Classic translation factor GTPase family. IF-2 subfamily.

It localises to the cytoplasm. Its function is as follows. One of the essential components for the initiation of protein synthesis. Protects formylmethionyl-tRNA from spontaneous hydrolysis and promotes its binding to the 30S ribosomal subunits. Also involved in the hydrolysis of GTP during the formation of the 70S ribosomal complex. The protein is Translation initiation factor IF-2 of Lachnospira eligens (strain ATCC 27750 / DSM 3376 / VPI C15-48 / C15-B4) (Eubacterium eligens).